An 82-amino-acid chain; its full sequence is MTFPRALTVIDDNGMVINIIFWFLLIIILILLSIALLNIIKLCMVCCNLGRTVIIVPAQHAYDAYKNFMRIKAYNPDGALLA.

Over 1–19 the chain is Virion surface; that stretch reads MTFPRALTVIDDNGMVINI. Residues 20–40 traverse the membrane as a helical segment; that stretch reads IFWFLLIIILILLSIALLNII. Residues 41-82 are Intravirion-facing; it reads KLCMVCCNLGRTVIIVPAQHAYDAYKNFMRIKAYNPDGALLA.

The protein belongs to the alphacoronaviruses E protein family. Homopentamer. Interacts with membrane protein M in the budding compartment of the host cell, which is located between endoplasmic reticulum and the Golgi complex. Interacts with Nucleoprotein.

The protein resides in the host Golgi apparatus membrane. In terms of biological role, plays a central role in virus morphogenesis and assembly. Acts as a viroporin and self-assembles in host membranes forming pentameric protein-lipid pores that allow ion transport. Also plays a role in the induction of apoptosis. This Porcine transmissible gastroenteritis coronavirus (strain Purdue) (TGEV) protein is Envelope small membrane protein.